We begin with the raw amino-acid sequence, 211 residues long: FMN-dependent NADH:quinone oxidoreductase (211 aa).

Position 17–19 (17–19 (SYS)) interacts with FMN.

This sequence belongs to the azoreductase type 1 family. Homodimer. The cofactor is FMN.

It catalyses the reaction 2 a quinone + NADH + H(+) = 2 a 1,4-benzosemiquinone + NAD(+). It carries out the reaction N,N-dimethyl-1,4-phenylenediamine + anthranilate + 2 NAD(+) = 2-(4-dimethylaminophenyl)diazenylbenzoate + 2 NADH + 2 H(+). Functionally, quinone reductase that provides resistance to thiol-specific stress caused by electrophilic quinones. Its function is as follows. Also exhibits azoreductase activity. Catalyzes the reductive cleavage of the azo bond in aromatic azo compounds to the corresponding amines. The chain is FMN-dependent NADH:quinone oxidoreductase from Bacillus velezensis (strain DSM 23117 / BGSC 10A6 / LMG 26770 / FZB42) (Bacillus amyloliquefaciens subsp. plantarum).